Reading from the N-terminus, the 323-residue chain is Serine acetyltransferase 2 (323 aa).

The disordered stretch occupies residues 302 to 323; it reads AQSNGPSLSAGDTEKGHTNSTS. The span at 313 to 323 shows a compositional bias: basic and acidic residues; sequence DTEKGHTNSTS.

The protein belongs to the transferase hexapeptide repeat family. Homomultimer. As to expression, ubiquitously expressed at low levels. Localized in vascular tissues, particularly in phloem.

The protein resides in the cytoplasm. It catalyses the reaction L-serine + acetyl-CoA = O-acetyl-L-serine + CoA. It functions in the pathway amino-acid biosynthesis; L-cysteine biosynthesis; L-cysteine from L-serine: step 1/2. The polypeptide is Serine acetyltransferase 2 (Arabidopsis thaliana (Mouse-ear cress)).